A 97-amino-acid chain; its full sequence is YcgL domain-containing protein Avin_32960 (97 aa).

Residues 3–87 enclose the YcgL domain; that stretch reads CICSIYKSPR…PEEEYVEHLP (85 aa).

In Azotobacter vinelandii (strain DJ / ATCC BAA-1303), this protein is YcgL domain-containing protein Avin_32960.